A 266-amino-acid chain; its full sequence is 4-hydroxy-tetrahydrodipicolinate reductase (266 aa).

11-16 is a binding site for NAD(+); the sequence is GALGKM. K39 serves as a coordination point for NADP(+). An NAD(+)-binding site is contributed by 100–102; it reads GTT. Residue H156 is the Proton donor/acceptor of the active site. H157 is a binding site for (S)-2,3,4,5-tetrahydrodipicolinate. The active-site Proton donor is the K160. 166–167 serves as a coordination point for (S)-2,3,4,5-tetrahydrodipicolinate; it reads GT.

The protein belongs to the DapB family.

Its subcellular location is the cytoplasm. It carries out the reaction (S)-2,3,4,5-tetrahydrodipicolinate + NAD(+) + H2O = (2S,4S)-4-hydroxy-2,3,4,5-tetrahydrodipicolinate + NADH + H(+). The enzyme catalyses (S)-2,3,4,5-tetrahydrodipicolinate + NADP(+) + H2O = (2S,4S)-4-hydroxy-2,3,4,5-tetrahydrodipicolinate + NADPH + H(+). It participates in amino-acid biosynthesis; L-lysine biosynthesis via DAP pathway; (S)-tetrahydrodipicolinate from L-aspartate: step 4/4. Functionally, catalyzes the conversion of 4-hydroxy-tetrahydrodipicolinate (HTPA) to tetrahydrodipicolinate. This chain is 4-hydroxy-tetrahydrodipicolinate reductase, found in Syntrophomonas wolfei subsp. wolfei (strain DSM 2245B / Goettingen).